Consider the following 487-residue polypeptide: Glutamyl-tRNA(Gln) amidotransferase subunit A (487 aa).

Residues lysine 75 and serine 150 each act as charge relay system in the active site. Serine 174 functions as the Acyl-ester intermediate in the catalytic mechanism.

Belongs to the amidase family. GatA subfamily. In terms of assembly, heterotrimer of A, B and C subunits.

The enzyme catalyses L-glutamyl-tRNA(Gln) + L-glutamine + ATP + H2O = L-glutaminyl-tRNA(Gln) + L-glutamate + ADP + phosphate + H(+). Functionally, allows the formation of correctly charged Gln-tRNA(Gln) through the transamidation of misacylated Glu-tRNA(Gln) in organisms which lack glutaminyl-tRNA synthetase. The reaction takes place in the presence of glutamine and ATP through an activated gamma-phospho-Glu-tRNA(Gln). The polypeptide is Glutamyl-tRNA(Gln) amidotransferase subunit A (Deinococcus deserti (strain DSM 17065 / CIP 109153 / LMG 22923 / VCD115)).